The following is a 61-amino-acid chain: Small ribosomal subunit protein uS14 (61 aa).

C24, C27, C40, and C43 together coordinate Zn(2+).

This sequence belongs to the universal ribosomal protein uS14 family. Zinc-binding uS14 subfamily. As to quaternary structure, part of the 30S ribosomal subunit. Contacts proteins S3 and S10. Zn(2+) serves as cofactor.

In terms of biological role, binds 16S rRNA, required for the assembly of 30S particles and may also be responsible for determining the conformation of the 16S rRNA at the A site. This chain is Small ribosomal subunit protein uS14, found in Syntrophobacter fumaroxidans (strain DSM 10017 / MPOB).